We begin with the raw amino-acid sequence, 554 residues long: Phenylalanine--tRNA ligase beta subunit (554 aa).

Residues 276–351 (LSLKSRMISV…INYGYEKFEG (76 aa)) form the B5 domain. Mg(2+) contacts are provided by Asp329, Asp335, Glu338, and Glu339.

The protein belongs to the phenylalanyl-tRNA synthetase beta subunit family. Type 2 subfamily. As to quaternary structure, tetramer of two alpha and two beta subunits. Mg(2+) serves as cofactor.

It localises to the cytoplasm. The enzyme catalyses tRNA(Phe) + L-phenylalanine + ATP = L-phenylalanyl-tRNA(Phe) + AMP + diphosphate + H(+). The protein is Phenylalanine--tRNA ligase beta subunit of Methanococcus maripaludis (strain C5 / ATCC BAA-1333).